Consider the following 440-residue polypeptide: Gap junction alpha-8 protein (440 aa).

An intramembrane segment occupies 2 to 12 (GDWSFLGNILE). Residues 13-21 (EVNEHSTVI) are Cytoplasmic-facing. Residues 22-42 (GRVWLTVLFIFRILILGTAAE) traverse the membrane as a helical segment. Over 43–71 (FVWGDEQSDFVCNTQQPGCENVCYDEAFP) the chain is Extracellular. Intrachain disulfides connect cysteine 54–cysteine 201, cysteine 61–cysteine 195, and cysteine 65–cysteine 190. Residues 72 to 92 (ISHIRLWVLQIIFVSTPSLVY) form a helical membrane-spanning segment. At 93–161 (VGHAVHHVRM…GTLLRTYVCH (69 aa)) the chain is on the cytoplasmic side. The interval 108 to 144 (EREAEELSQQSPGNGGERAPLAADQGSVKKSSSSSKG) is disordered. The helical transmembrane segment at 162 to 182 (IIFKTLFEVGFIVGHYFLYGF) threads the bilayer. Residues 183-210 (RILPLYRCSRWPCPNVVDCFVSRPTEKT) lie on the Extracellular side of the membrane. Residues 211-231 (IFILFMLSVASVSLFLNILEM) form a helical membrane-spanning segment. Residues 232–440 (SHLGLKKIRS…SRARSDDLTV (209 aa)) lie on the Cytoplasmic side of the membrane. Residues 334 to 440 (GAQEGVEEEQ…SRARSDDLTV (107 aa)) form a disordered region. Basic and acidic residues-rich tracts occupy residues 353–365 (VGDK…RVST) and 375–405 (EEEK…ELTP). Over residues 423–432 (LSRLSKASSR) the composition is skewed to low complexity.

This sequence belongs to the connexin family. Alpha-type (group II) subfamily. In terms of assembly, a hemichannel or connexon is composed of a hexamer of connexins. A functional gap junction is formed by the apposition of two hemichannels. Forms heteromeric channels with GJA3. As to expression, detected in eye lens (at protein level). Eye lens.

It localises to the cell membrane. It is found in the cell junction. Its subcellular location is the gap junction. Functionally, structural component of eye lens gap junctions. Gap junctions are dodecameric channels that connect the cytoplasm of adjoining cells. They are formed by the docking of two hexameric hemichannels, one from each cell membrane. Small molecules and ions diffuse from one cell to a neighboring cell via the central pore. In Ovis aries (Sheep), this protein is Gap junction alpha-8 protein (GJA8).